A 297-amino-acid polypeptide reads, in one-letter code: N-acetylmannosamine kinase (297 aa).

ATP-binding positions include 5–12 (ALDIGGTK) and 132–139 (GVGGGIIL). Zn(2+) contacts are provided by H156, C166, C168, and C173.

It belongs to the ROK (NagC/XylR) family. NanK subfamily. In terms of assembly, homodimer.

The catalysed reaction is an N-acyl-D-mannosamine + ATP = an N-acyl-D-mannosamine 6-phosphate + ADP + H(+). It participates in amino-sugar metabolism; N-acetylneuraminate degradation; D-fructose 6-phosphate from N-acetylneuraminate: step 2/5. Catalyzes the phosphorylation of N-acetylmannosamine (ManNAc) to ManNAc-6-P. This chain is N-acetylmannosamine kinase, found in Pasteurella multocida (strain Pm70).